The sequence spans 94 residues: Evasin P1172 (94 aa).

Disulfide bonds link cysteine 35-cysteine 54, cysteine 39-cysteine 56, and cysteine 50-cysteine 67. Residues asparagine 38, asparagine 44, asparagine 53, and asparagine 80 are each glycosylated (N-linked (GlcNAc...) asparagine).

The protein localises to the secreted. Its function is as follows. Salivary chemokine-binding protein which binds to host chemokines CXCL1, CXCL2, CXCL5 and CXCL8. In Ixodes ricinus (Common tick), this protein is Evasin P1172.